The primary structure comprises 123 residues: Peptide methionine sulfoxide reductase MsrA (123 aa).

Residue C8 is part of the active site.

It belongs to the MsrA Met sulfoxide reductase family.

It carries out the reaction L-methionyl-[protein] + [thioredoxin]-disulfide + H2O = L-methionyl-(S)-S-oxide-[protein] + [thioredoxin]-dithiol. The enzyme catalyses [thioredoxin]-disulfide + L-methionine + H2O = L-methionine (S)-S-oxide + [thioredoxin]-dithiol. Has an important function as a repair enzyme for proteins that have been inactivated by oxidation. Catalyzes the reversible oxidation-reduction of methionine sulfoxide in proteins to methionine. The chain is Peptide methionine sulfoxide reductase MsrA from Thermoactinomyces vulgaris.